Consider the following 195-residue polypeptide: MTTLSDSALDQLFLSARTHNAWQDKPVDDALLHRLIDLTKFGPTSANASPARFVFVKSPEAKARLKPALSEGNLAKTMAAPVTVIVGMDMAFHEHLPRLFPHADARSWFAGNDALIETTAFRNSSLQGAYLILAARALGLDAGPMSGFDGAKVDAAFFAGTAIRSNFLVNLGYGDPAGLFPRSPRFDFDDIARIE.

Belongs to the nitroreductase family. HadB/RutE subfamily. It depends on FMN as a cofactor.

The polypeptide is Putative NADH dehydrogenase/NAD(P)H nitroreductase Bcep18194_B1060 (Burkholderia lata (strain ATCC 17760 / DSM 23089 / LMG 22485 / NCIMB 9086 / R18194 / 383)).